Here is a 184-residue protein sequence, read N- to C-terminus: Ribosome-recycling factor (184 aa).

This sequence belongs to the RRF family.

It is found in the cytoplasm. Functionally, responsible for the release of ribosomes from messenger RNA at the termination of protein biosynthesis. May increase the efficiency of translation by recycling ribosomes from one round of translation to another. This chain is Ribosome-recycling factor, found in Borrelia turicatae (strain 91E135).